Consider the following 850-residue polypeptide: Bifunctional levopimaradiene synthase, chloroplastic (850 aa).

A chloroplast-targeting transit peptide spans methionine 1–valine 52. Residue lysine 250 coordinates substrate. Mg(2+) contacts are provided by aspartate 383 and aspartate 385. A DXDD motif motif is present at residues aspartate 383 to aspartate 386. Lysine 470 is a substrate binding site. Aspartate 602, aspartate 606, asparagine 746, threonine 750, and glutamate 754 together coordinate Mg(2+). The DDXXD motif signature appears at aspartate 602–aspartate 606.

The protein belongs to the terpene synthase family. Tpsd subfamily. It depends on Mg(2+) as a cofactor.

The protein localises to the plastid. It localises to the chloroplast. It catalyses the reaction (2E,6E,10E)-geranylgeranyl diphosphate = (+)-copalyl diphosphate. The enzyme catalyses (+)-copalyl diphosphate = abieta-7,13-diene + diphosphate. The catalysed reaction is (+)-copalyl diphosphate = abieta-8(14),12-diene + diphosphate. It carries out the reaction (+)-copalyl diphosphate = neoabietadiene + diphosphate. Its pathway is terpene metabolism; oleoresin biosynthesis. Involved in defensive oleoresin formation in conifers in response to insect attack or other injury. Involved in diterpene (C20) olefins biosynthesis. Bifunctional enzyme that catalyzes two sequential cyclizations of geranylgeranyl diphosphate (GGPP) to levopimaradiene. Levopimaradiene is the major products of the enzyme with abietadiene and neoabietadiene. No activity with farnesyl diphosphate (FPP) as substrate. This is Bifunctional levopimaradiene synthase, chloroplastic from Pinus contorta (Shore pine).